The following is a 99-amino-acid chain: uncharacterized protein (99 aa).

It belongs to the HesB/IscA family.

This is an uncharacterized protein from Staphylococcus haemolyticus (strain JCSC1435).